The chain runs to 41 residues: Large ribosomal subunit protein bL36 (41 aa).

The protein belongs to the bacterial ribosomal protein bL36 family.

The chain is Large ribosomal subunit protein bL36 from Methylorubrum extorquens (strain CM4 / NCIMB 13688) (Methylobacterium extorquens).